Here is a 738-residue protein sequence, read N- to C-terminus: 1,4-alpha-glucan branching enzyme GlgB (738 aa).

Asp-417 (nucleophile) is an active-site residue. The active-site Proton donor is the Glu-472.

Belongs to the glycosyl hydrolase 13 family. GlgB subfamily. In terms of assembly, monomer.

The enzyme catalyses Transfers a segment of a (1-&gt;4)-alpha-D-glucan chain to a primary hydroxy group in a similar glucan chain.. It functions in the pathway glycan biosynthesis; glycogen biosynthesis. Catalyzes the formation of the alpha-1,6-glucosidic linkages in glycogen by scission of a 1,4-alpha-linked oligosaccharide from growing alpha-1,4-glucan chains and the subsequent attachment of the oligosaccharide to the alpha-1,6 position. This chain is 1,4-alpha-glucan branching enzyme GlgB, found in Burkholderia pseudomallei (strain 668).